The primary structure comprises 278 residues: NAD kinase (278 aa).

The active-site Proton acceptor is the D56. NAD(+) is bound by residues 56-57 (DG), 132-133 (NE), R158, D160, and 171-176 (TAYNKS).

Belongs to the NAD kinase family. A divalent metal cation serves as cofactor.

It is found in the cytoplasm. The catalysed reaction is NAD(+) + ATP = ADP + NADP(+) + H(+). Its function is as follows. Involved in the regulation of the intracellular balance of NAD and NADP, and is a key enzyme in the biosynthesis of NADP. Catalyzes specifically the phosphorylation on 2'-hydroxyl of the adenosine moiety of NAD to yield NADP. The chain is NAD kinase from Streptococcus agalactiae serotype III (strain NEM316).